We begin with the raw amino-acid sequence, 137 residues long: Small ribosomal subunit protein eS17 (137 aa).

This sequence belongs to the eukaryotic ribosomal protein eS17 family. In terms of assembly, component of the small ribosomal subunit. Mature ribosomes consist of a small (40S) and a large (60S) subunit. The 40S subunit contains about 32 different proteins and 1 molecule of RNA (18S). The 60S subunit contains 45 different proteins and 3 molecules of RNA (25S, 5.8S and 5S).

The protein localises to the cytoplasm. Its function is as follows. Component of the ribosome, a large ribonucleoprotein complex responsible for the synthesis of proteins in the cell. The small ribosomal subunit (SSU) binds messenger RNAs (mRNAs) and translates the encoded message by selecting cognate aminoacyl-transfer RNA (tRNA) molecules. The large subunit (LSU) contains the ribosomal catalytic site termed the peptidyl transferase center (PTC), which catalyzes the formation of peptide bonds, thereby polymerizing the amino acids delivered by tRNAs into a polypeptide chain. The nascent polypeptides leave the ribosome through a tunnel in the LSU and interact with protein factors that function in enzymatic processing, targeting, and the membrane insertion of nascent chains at the exit of the ribosomal tunnel. This Candida albicans (strain SC5314 / ATCC MYA-2876) (Yeast) protein is Small ribosomal subunit protein eS17 (RPS17B).